Reading from the N-terminus, the 107-residue chain is Large ribosomal subunit protein uL24 (107 aa).

Belongs to the universal ribosomal protein uL24 family. Part of the 50S ribosomal subunit.

In terms of biological role, one of two assembly initiator proteins, it binds directly to the 5'-end of the 23S rRNA, where it nucleates assembly of the 50S subunit. Functionally, one of the proteins that surrounds the polypeptide exit tunnel on the outside of the subunit. In Mesomycoplasma hyopneumoniae (strain 7448) (Mycoplasma hyopneumoniae), this protein is Large ribosomal subunit protein uL24.